We begin with the raw amino-acid sequence, 830 residues long: Eisosome protein 1 (830 aa).

Disordered regions lie at residues 1 to 29 (MSLV…SAGK), 128 to 156 (RSRT…KTPK), and 650 to 830 (GEFL…KEVF). Low complexity-rich tracts occupy residues 128 to 148 (RSRT…SSSS) and 741 to 761 (TKTT…KPVT). The span at 810–830 (EGGKEEPTSKDNRKSLFKEVF) shows a compositional bias: basic and acidic residues.

It belongs to the EIS1 family.

The protein localises to the cytoplasmic granule. The protein resides in the cell membrane. Its function is as follows. Required for normal formation of eisosomes, large cytoplasmic protein assemblies that localize to specialized domains on plasma membrane and mark the site of endocytosis. This chain is Eisosome protein 1 (EIS1), found in Kluyveromyces lactis (strain ATCC 8585 / CBS 2359 / DSM 70799 / NBRC 1267 / NRRL Y-1140 / WM37) (Yeast).